A 1134-amino-acid chain; its full sequence is Ubinuclein-1 (1134 aa).

2 disordered regions span residues 1-38 (MSEP…HQDC) and 78-98 (LQPG…EKER). The tract at residues 1–166 (MSEPHRVQFT…YGGFYINSGT (166 aa)) is sufficient for interaction with HIRA. Basic and acidic residues-rich tracts occupy residues 25-38 (RKEE…HQDC) and 81-98 (GDKK…EKER). T166 bears the Phosphothreonine mark. Residues 171–220 (QASESEDDFIKEKKKKSPKKRKLKEGGEKIKKKKKDDTYDKEKKSKKSKF) are disordered. Phosphoserine is present on residues S173 and S175. Basic residues predominate over residues 182 to 193 (EKKKKSPKKRKL). Positions 194-213 (KEGGEKIKKKKKDDTYDKEK) are enriched in basic and acidic residues. K222 is modified (N6-acetyllysine). The span at 253–268 (QKEKEAQKKREEEHKP) shows a compositional bias: basic and acidic residues. 4 disordered regions span residues 253 to 282 (QKEK…LREL), 321 to 358 (SESP…EGLP), 480 to 504 (EEEK…KGGR), and 594 to 660 (PSKI…LEDS). A phosphoserine mark is found at S323, S336, S338, and S493. Positions 479–542 (LEEEKDKEQR…SQDLERNNKA (64 aa)) form a coiled coil. Basic and acidic residues-rich tracts occupy residues 480–493 (EEEK…RICS) and 598–610 (KVKE…DKKV). Phosphoserine is present on residues S660 and S677. Disordered regions lie at residues 712-836 (TEEK…SPTQ) and 852-986 (QGFH…GVAK). 2 stretches are compositionally biased toward low complexity: residues 792–804 (GPQV…GPQV) and 856–891 (PSAP…KPHS). The segment covering 892–905 (VSSAGSSYKNNPFA) has biased composition (polar residues). Residues 906–932 (SSISKHGVSSGSSSSGGTPVQSSVSGS) are compositionally biased toward low complexity. The segment covering 941–950 (SVGQATSRPV) has biased composition (polar residues). A compositionally biased stretch (gly residues) spans 973-982 (PNGDSSGGTQ). S1025 is modified (phosphoserine). Residues 1093–1108 (GLHSSPPHAAPLPHAA) show a composition bias toward low complexity. The segment at 1093-1134 (GLHSSPPHAAPLPHAAVPTHIPQSLPGASQLHGKGPAVPRKL) is disordered.

The protein belongs to the ubinuclein family. As to quaternary structure, component of a complex that includes at least ASF1A, CABIN1, HIRA, histone H3.3 and UBN1. Interacts with HIRA (via WD repeat domain); the interaction is direct. Interacts with ASF1A, CEBPA, TJP1, TJP2 and TJP3. In terms of assembly, (Microbial infection) Interacts with Epstein-Barr virus BZLF1. Ubiquitous. Also expressed in numerous tumors and cancer cell lines.

Its subcellular location is the nucleus. The protein resides in the nucleoplasm. The protein localises to the PML body. It localises to the cell junction. It is found in the tight junction. Its function is as follows. Acts as a novel regulator of senescence. Involved in the formation of senescence-associated heterochromatin foci (SAHF), which represses expression of proliferation-promoting genes. Binds to proliferation-promoting genes. May be required for replication-independent chromatin assembly. The polypeptide is Ubinuclein-1 (UBN1) (Homo sapiens (Human)).